The primary structure comprises 671 residues: MAELTALYTLTAQMKREGICRLLVLSGEEGWCFDHALKLRDALPGDWLWISPQLDAENHCSPSALQTLLGREFRHAVFDARHGFDAAAFAALSGTLKAGSWLVLLLPVWEEWENQPDADSLRWSDCPDPIATPHFVQHLKRVLTADNDAILWRQNQPFSLAHFTPRTDWHPATGAPQPEQQQLLQQLLTMPPGVAAVTAARGRGKSALAGQLISRIAGSAIVTAPAKAATDVLAQFAGEKFRFIAPDALLASDEQADWLVVDEAAAIPAPLLHQLVSRFPRTLLTTTVQGYEGTGRGFLLKFCARFPHLHRFELQQPIRWAQGCPLEKMVSEALVFNDENFTHTPQGNIVISAFEQTLWRSEPETPLKVYQLLSGAHYRTLPLDLRRMMDAPGQHFLQAAGENEIAGALWLVDEGGLSQELSQAVWAGFRRPRGNLVAQSLAAHGSNPLAATLRGRRVSRIAVHPARQREGTGRQLIAGALQYTHDLDYLSVSFGYTGELWRFWQRCGFVLVRMGNHREASSGCYTAMALLPMSDAGKQLAEREHYRLRRDAQALAQWNGEMLPVDPLNDAILSDDDWLELAGFAFAHRPLLTSLGCLLRLLQTSELALPALRGRLQKNASDAQLCTTLKLSGRKMLLVRQREEAAQALFALNEVRTERLRDRITQWQFFH.

Residues glutamine 180, 202–211 (GRGKSALAGQ), and arginine 319 each bind ATP. The N-acetyltransferase domain occupies 356–531 (QTLWRSEPET…SGCYTAMALL (176 aa)). Residues 461–463 (IAV), 468–474 (QREGTGR), glutamate 499, and arginine 506 each bind acetyl-CoA.

The protein belongs to the RNA cytidine acetyltransferase family. TmcA subfamily.

It is found in the cytoplasm. The enzyme catalyses cytidine(34) in elongator tRNA(Met) + acetyl-CoA + ATP + H2O = N(4)-acetylcytidine(34) in elongator tRNA(Met) + ADP + phosphate + CoA + H(+). Its function is as follows. Catalyzes the formation of N(4)-acetylcytidine (ac(4)C) at the wobble position of tRNA(Met), by using acetyl-CoA as an acetyl donor and ATP (or GTP). This Shigella flexneri serotype 5b (strain 8401) protein is tRNA(Met) cytidine acetyltransferase TmcA.